The sequence spans 231 residues: Lipoprotein-releasing system ATP-binding protein LolD (231 aa).

Positions 6–231 constitute an ABC transporter domain; that stretch reads LQVQAVSKSY…YLQAVAEHAQ (226 aa). Residue 42 to 49 participates in ATP binding; that stretch reads GTSGSGKS.

It belongs to the ABC transporter superfamily. Lipoprotein translocase (TC 3.A.1.125) family. The complex is composed of two ATP-binding proteins (LolD) and two transmembrane proteins (LolC and LolE).

It is found in the cell inner membrane. Functionally, part of the ABC transporter complex LolCDE involved in the translocation of mature outer membrane-directed lipoproteins, from the inner membrane to the periplasmic chaperone, LolA. Responsible for the formation of the LolA-lipoprotein complex in an ATP-dependent manner. This is Lipoprotein-releasing system ATP-binding protein LolD from Shewanella sp. (strain MR-7).